A 199-amino-acid polypeptide reads, in one-letter code: Signal peptidase complex subunit 2 (199 aa).

Over 1 to 49 (MGKKDEKSQQGEELVKVNKWDGSAVKHALDDAVKTCLLGDRPQLKEQFG) the chain is Cytoplasmic. The chain crosses the membrane as a helical span at residues 50 to 72 (LVNTRLALCALAVSVAIMAHAWD). Over 73–81 (FTHPFPESR) the chain is Lumenal. The helical transmembrane segment at 82-104 (PVLLFSVLAYFALLGILTLHSSF) threads the bilayer. The Cytoplasmic portion of the chain corresponds to 105-199 (REKGTFAVAL…KKNASSLSSN (95 aa)).

The protein belongs to the SPCS2 family. Component of the signal peptidase complex (SPC) composed of a catalytic subunit twr/SEC11 and three accessory subunits Spase12/SPCS1, Spase25/SPCS2 and Spase22-23/SPCS3. The complex induces a local thinning of the ER membrane which is used to measure the length of the signal peptide (SP) h-region of protein substrates. This ensures the selectivity of the complex towards h-regions shorter than 18-20 amino acids.

Its subcellular location is the endoplasmic reticulum membrane. In terms of biological role, component of the signal peptidase complex (SPC) which catalyzes the cleavage of N-terminal signal sequences from nascent proteins as they are translocated into the lumen of the endoplasmic reticulum. Enhances the enzymatic activity of SPC and facilitates the interactions between different components of the translocation site. This chain is Signal peptidase complex subunit 2 (Spase25), found in Drosophila melanogaster (Fruit fly).